The sequence spans 313 residues: Porphobilinogen deaminase (313 aa).

Position 242 is an S-(dipyrrolylmethanemethyl)cysteine (cysteine 242).

This sequence belongs to the HMBS family. In terms of assembly, monomer. Dipyrromethane serves as cofactor.

It carries out the reaction 4 porphobilinogen + H2O = hydroxymethylbilane + 4 NH4(+). The protein operates within porphyrin-containing compound metabolism; protoporphyrin-IX biosynthesis; coproporphyrinogen-III from 5-aminolevulinate: step 2/4. Its function is as follows. Tetrapolymerization of the monopyrrole PBG into the hydroxymethylbilane pre-uroporphyrinogen in several discrete steps. This is Porphobilinogen deaminase from Escherichia fergusonii (strain ATCC 35469 / DSM 13698 / CCUG 18766 / IAM 14443 / JCM 21226 / LMG 7866 / NBRC 102419 / NCTC 12128 / CDC 0568-73).